The chain runs to 465 residues: Ribulose bisphosphate carboxylase large chain (465 aa).

Position 4 is an N6,N6,N6-trimethyllysine (Lys4). 2 residues coordinate substrate: Xaa113 and Thr163. Lys165 serves as the catalytic Proton acceptor. Position 167 (Lys167) interacts with substrate. Mg(2+)-binding residues include Lys191, Asp193, and Glu194. Lys191 bears the N6-carboxylysine mark. His284 (proton acceptor) is an active-site residue. Substrate contacts are provided by Arg285, His317, and Ser369.

This sequence belongs to the RuBisCO large chain family. Type I subfamily. As to quaternary structure, heterohexadecamer of 8 large chains and 8 small chains; disulfide-linked. The disulfide link is formed within the large subunit homodimers. The cofactor is Mg(2+). In terms of processing, the disulfide bond which can form in the large chain dimeric partners within the hexadecamer appears to be associated with oxidative stress and protein turnover.

It localises to the plastid. It is found in the chloroplast. It catalyses the reaction 2 (2R)-3-phosphoglycerate + 2 H(+) = D-ribulose 1,5-bisphosphate + CO2 + H2O. The catalysed reaction is D-ribulose 1,5-bisphosphate + O2 = 2-phosphoglycolate + (2R)-3-phosphoglycerate + 2 H(+). RuBisCO catalyzes two reactions: the carboxylation of D-ribulose 1,5-bisphosphate, the primary event in carbon dioxide fixation, as well as the oxidative fragmentation of the pentose substrate in the photorespiration process. Both reactions occur simultaneously and in competition at the same active site. This is Ribulose bisphosphate carboxylase large chain from Cornus obliqua (Silky dogwood).